The following is a 362-amino-acid chain: Histidine protein methyltransferase 1 homolog (362 aa).

Residues 28-89 (KSQKGKEDKN…ACEKQPSLKP (62 aa)) form a disordered region. A compositionally biased stretch (polar residues) spans 55 to 73 (SLGSAASSEDTDSPPSTAD). Phosphoserine occurs at positions 62 and 67. Residue histidine 144 is modified to Tele-methylhistidine. Residues 158-162 (IWECT), glycine 185, and 206-208 (QDY) each bind S-adenosyl-L-methionine. The short motif at 237-243 (PAGKRQR) is the Nuclear localization signal element. S-adenosyl-L-methionine is bound by residues 259–261 (GEW) and serine 283.

The protein belongs to the methyltransferase superfamily. METTL18 family. As to quaternary structure, interacts with GRWD1 and members of the heat shock protein 90 and 70 families; these proteins may possibly be methylation substrates for the enzyme. Post-translationally, monomethylated at His-144 through automethylation. Automethylation at His-144 positively regulates the methyltransferase activity toward RPL3. Probably methylated on other residues.

The protein localises to the cytoplasm. Its subcellular location is the cytosol. The protein resides in the nucleus. It is found in the nucleolus. The catalysed reaction is L-histidyl-[protein] + S-adenosyl-L-methionine = N(tele)-methyl-L-histidyl-[protein] + S-adenosyl-L-homocysteine + H(+). Its function is as follows. Protein-L-histidine N-tele-methyltransferase that specifically monomethylates RPL3, thereby regulating translation elongation. Histidine methylation of RPL3 regulates translation elongation by slowing ribosome traversal on tyrosine codons: slower elongation provides enough time for proper folding of synthesized proteins and prevents cellular aggregation of tyrosine-rich proteins. The chain is Histidine protein methyltransferase 1 homolog from Rattus norvegicus (Rat).